The following is a 395-amino-acid chain: Choline/ethanolamine kinase (395 aa).

Ala2 carries the post-translational modification N-acetylalanine. Residues 75 to 81 (SGGLSNL), Arg104, 146 to 152 (QYIPSRP), Gln244, and Asp264 each bind ATP. A phosphocholine-binding site is contributed by 77–79 (GLS).

The protein belongs to the choline/ethanolamine kinase family. In terms of assembly, homodimer, and heterodimer with CHKA.

The catalysed reaction is choline + ATP = phosphocholine + ADP + H(+). It catalyses the reaction ethanolamine + ATP = phosphoethanolamine + ADP + H(+). Its pathway is phospholipid metabolism; phosphatidylethanolamine biosynthesis; phosphatidylethanolamine from ethanolamine: step 1/3. Functionally, has a key role in phospholipid metabolism, and catalyzes the first step of phosphatidylethanolamine and phosphatidylcholine biosynthesis. In Homo sapiens (Human), this protein is Choline/ethanolamine kinase (CHKB).